The sequence spans 229 residues: Ribose-5-phosphate isomerase A (229 aa).

Substrate-binding positions include 28 to 31 (TGST), 85 to 88 (DGAD), and 98 to 101 (KGRG). Residue glutamate 107 is the Proton acceptor of the active site. Lysine 125 contributes to the substrate binding site.

The protein belongs to the ribose 5-phosphate isomerase family. Homodimer.

The catalysed reaction is aldehydo-D-ribose 5-phosphate = D-ribulose 5-phosphate. Its pathway is carbohydrate degradation; pentose phosphate pathway; D-ribose 5-phosphate from D-ribulose 5-phosphate (non-oxidative stage): step 1/1. Its function is as follows. Catalyzes the reversible conversion of ribose-5-phosphate to ribulose 5-phosphate. This chain is Ribose-5-phosphate isomerase A, found in Pyrococcus abyssi (strain GE5 / Orsay).